Reading from the N-terminus, the 441-residue chain is UDP-N-acetylglucosamine 1-carboxyvinyltransferase 1 (441 aa).

42 to 43 contacts phosphoenolpyruvate; that stretch reads KN. Arginine 117 lines the UDP-N-acetyl-alpha-D-glucosamine pocket. Cysteine 141 functions as the Proton donor in the catalytic mechanism. The residue at position 141 (cysteine 141) is a 2-(S-cysteinyl)pyruvic acid O-phosphothioketal. Positions 330 and 352 each coordinate UDP-N-acetyl-alpha-D-glucosamine.

This sequence belongs to the EPSP synthase family. MurA subfamily.

It localises to the cytoplasm. It carries out the reaction phosphoenolpyruvate + UDP-N-acetyl-alpha-D-glucosamine = UDP-N-acetyl-3-O-(1-carboxyvinyl)-alpha-D-glucosamine + phosphate. It functions in the pathway cell wall biogenesis; peptidoglycan biosynthesis. Its function is as follows. Cell wall formation. Adds enolpyruvyl to UDP-N-acetylglucosamine. This is UDP-N-acetylglucosamine 1-carboxyvinyltransferase 1 from Symbiobacterium thermophilum (strain DSM 24528 / JCM 14929 / IAM 14863 / T).